Reading from the N-terminus, the 224-residue chain is Cardosin-E (224 aa).

The 221-residue stretch at 1–221 folds into the Peptidase A1 domain; the sequence is DSGSAIVALT…DYGNLLVGFA (221 aa). Asp-35 is an active-site residue. An intrachain disulfide couples Cys-125 to Cys-129. Asp-134 is an active-site residue.

It belongs to the peptidase A1 family. As to quaternary structure, heterodimer of a light chain and a heavy chain. An intermediate form is produced first, and undergoes proteolytic processing to remove the internal plant-specific insert (PSI) and the propeptide. N-glycosylated. Pistils.

Its subcellular location is the microsome membrane. The protein localises to the protein storage vacuole. The protein resides in the secreted. It is found in the cell wall. It localises to the extracellular space. Its subcellular location is the extracellular matrix. Its activity is regulated as follows. Inhibited by pepstatin. Its function is as follows. Aspartic protease with a high preference for bonds between hydrophobic residues. The sequence is that of Cardosin-E from Cynara cardunculus (Cardoon).